The primary structure comprises 337 residues: MGEDMRVVKVESKWPPIIVMVISQVAMGSVNALVKKALDVGVNHMIIGAYRIAISSFILAPIAYILEREIIPEITFRLMVDHFISGLLGASLMQFFYLLGLSYTSATVACALVSLMPAITFAFALILRTEKIKSLRTQAGMIKVMGTIICISGALFLTFYKGPHISNSHSHQEALPHNNNSDHNTKNWLLGCLYLTIGTVLISLWILFQGTLSIKYPCKFSSTCLMSIFAAFQCALLSLYKSRDVKDWIIDDRFVIGVIVYAGVIGQAMSTVSVTWGVKKLGAVFVSAIMPIALISASLFDFIILHTPLYLGSLIGSVGTITGLYVFLWGKNKDMEA.

The next 10 helical transmembrane spans lie at 14-34 (WPPI…NALV), 46-66 (IIGA…AYIL), 83-103 (FISG…GLSY), 107-127 (TVAC…ALIL), 139-159 (AGMI…FLTF), 188-208 (WLLG…WILF), 220-240 (FSST…LSLY), 254-274 (FVIG…TVSV), 284-304 (VFVS…DFII), and 309-329 (LYLG…VFLW). The 131-residue stretch at 27–157 (MGSVNALVKK…IICISGALFL (131 aa)) folds into the EamA 1 domain. In terms of domain architecture, EamA 2 spans 220 to 328 (FSSTCLMSIF…GTITGLYVFL (109 aa)).

This sequence belongs to the drug/metabolite transporter (DMT) superfamily. Plant drug/metabolite exporter (P-DME) (TC 2.A.7.4) family.

It localises to the membrane. The polypeptide is WAT1-related protein At1g11460 (Arabidopsis thaliana (Mouse-ear cress)).